We begin with the raw amino-acid sequence, 210 residues long: Peptidyl-tRNA hydrolase (210 aa).

Tyr-15 is a tRNA binding site. The active-site Proton acceptor is His-20. TRNA-binding residues include Phe-66, Asn-68, and Asn-114. Residues 186 to 210 (IHTSKPPRPKPPRREPGDGGTPATA) are disordered.

This sequence belongs to the PTH family. Monomer.

It is found in the cytoplasm. The catalysed reaction is an N-acyl-L-alpha-aminoacyl-tRNA + H2O = an N-acyl-L-amino acid + a tRNA + H(+). Functionally, hydrolyzes ribosome-free peptidyl-tRNAs (with 1 or more amino acids incorporated), which drop off the ribosome during protein synthesis, or as a result of ribosome stalling. Its function is as follows. Catalyzes the release of premature peptidyl moieties from peptidyl-tRNA molecules trapped in stalled 50S ribosomal subunits, and thus maintains levels of free tRNAs and 50S ribosomes. The polypeptide is Peptidyl-tRNA hydrolase (Variovorax paradoxus (strain S110)).